Reading from the N-terminus, the 138-residue chain is Large ribosomal subunit protein uL16 (138 aa).

The span at 1–16 shows a compositional bias: basic residues; sequence MLIPRRVKHRKQHHPG. Residues 1 to 24 are disordered; it reads MLIPRRVKHRKQHHPGRSGAATGG.

Belongs to the universal ribosomal protein uL16 family. As to quaternary structure, part of the 50S ribosomal subunit.

Binds 23S rRNA and is also seen to make contacts with the A and possibly P site tRNAs. This Paenarthrobacter aurescens (strain TC1) protein is Large ribosomal subunit protein uL16.